Here is an 808-residue protein sequence, read N- to C-terminus: Spindle assembly abnormal protein 4 (808 aa).

The tract at residues methionine 1–serine 151 is disordered. Low complexity predominate over residues proline 42–serine 54. 2 stretches are compositionally biased toward polar residues: residues serine 61 to serine 78 and proline 85 to asparagine 104. A compositionally biased stretch (basic and acidic residues) spans alanine 113–alanine 123. The segment covering glutamate 124–glutamate 133 has biased composition (acidic residues). The stretch at lysine 161–serine 181 forms a coiled coil. Disordered stretches follow at residues threonine 187–arginine 206 and valine 271–arginine 298. Residues methionine 280 to glutamine 294 show a composition bias toward polar residues. Positions leucine 314 to phenylalanine 503 form a coiled coil. Positions lysine 511–threonine 529 are enriched in polar residues. Residues lysine 511 to asparagine 564 are disordered. Residues serine 530 to serine 541 are compositionally biased toward low complexity. Residues leucine 542–serine 551 are compositionally biased toward polar residues.

Interacts with hyls-1; leading to hyls-1 localization into newly forming centrioles.

The protein localises to the cytoplasm. It is found in the cytoskeleton. Its subcellular location is the microtubule organizing center. It localises to the centrosome. In terms of biological role, required for centrosome duplication. Plays a central role in determining centrosome size. This Caenorhabditis elegans protein is Spindle assembly abnormal protein 4 (sas-4).